A 251-amino-acid polypeptide reads, in one-letter code: MENNKKVLKKMVFFVLVTFLGLTISQEVFAQQDPDPSQLHRSSLVKNLQNIYFLYEGDPVTHENVKSVDQLLSHDLIYNVSGPNYDKLKTELKNQEMATLFKDKNVDIYGVEYYHLCYLCENAERSACIYGGVTNHEGNHLEIPKKIVVKVSIDGIQSLSFDIETNKKMVTAQELDYKVRKYLTDNKQLYTNGPSKYETGYIKFIPKNKESFWFDFFPEPEFTQSKYLMIYKDNETLDSNTSQIEVYLTTK.

Residues 1–30 (MENNKKVLKKMVFFVLVTFLGLTISQEVFA) form the signal peptide. A disulfide bridge connects residues Cys117 and Cys128.

Belongs to the staphylococcal/streptococcal toxin family.

In terms of biological role, causative agent of the symptoms associated with scarlet fever, have been associated with streptococcal toxic shock-like disease and may play a role in the early events of rheumatic fever. The sequence is that of Exotoxin type A (speA) from Streptococcus pyogenes serotype M18 (strain MGAS8232).